The following is a 415-amino-acid chain: NPL4-like protein (415 aa).

One can recognise an MPN domain in the interval 130–279; it reads AASFDRDSAN…FEAFQMSEIC (150 aa).

Belongs to the NPL4 family.

It is found in the endoplasmic reticulum. The protein operates within protein degradation; proteasomal ubiquitin-dependent pathway. In terms of biological role, may be part of a complex that binds ubiquitinated proteins and that is necessary for the export of misfolded proteins from the ER to the cytoplasm, where they are degraded by the proteasome. This chain is NPL4-like protein, found in Oryza sativa subsp. japonica (Rice).